We begin with the raw amino-acid sequence, 172 residues long: Small ribosomal subunit protein bS6 (172 aa).

The interval 100–172 (LPAKRVVKTS…ENKEIEKKED (73 aa)) is disordered. Positions 107-172 (KTSEKNVKED…ENKEIEKKED (66 aa)) are enriched in basic and acidic residues.

It belongs to the bacterial ribosomal protein bS6 family.

Its function is as follows. Binds together with bS18 to 16S ribosomal RNA. In Prochlorococcus marinus (strain MIT 9211), this protein is Small ribosomal subunit protein bS6.